We begin with the raw amino-acid sequence, 128 residues long: Ribonuclease pancreatic (128 aa).

Basic and acidic residues predominate over residues Lys-1–Met-13. Residues Lys-1 to Cys-26 form a disordered region. Substrate-binding residues include Lys-7 and Arg-10. The active-site Proton acceptor is the His-12. Polar residues predominate over residues Asp-14–Cys-26. Disulfide bonds link Cys-26-Cys-84, Cys-40-Cys-95, Cys-58-Cys-110, and Cys-65-Cys-72. A glycan (N-linked (GlcNAc...) asparagine) is linked at Asn-34. Lys-41–Thr-45 is a binding site for substrate. N-linked (GlcNAc...) asparagine glycosylation occurs at Asn-62. The substrate site is built by Lys-66 and Arg-85. His-119 (proton donor) is an active-site residue.

It belongs to the pancreatic ribonuclease family. Monomer. Interacts with and forms tight 1:1 complexes with RNH1. Dimerization of two such complexes may occur. Interaction with RNH1 inhibits this protein. In terms of tissue distribution, pancreas.

It is found in the secreted. It catalyses the reaction an [RNA] containing cytidine + H2O = an [RNA]-3'-cytidine-3'-phosphate + a 5'-hydroxy-ribonucleotide-3'-[RNA].. It carries out the reaction an [RNA] containing uridine + H2O = an [RNA]-3'-uridine-3'-phosphate + a 5'-hydroxy-ribonucleotide-3'-[RNA].. Endonuclease that catalyzes the cleavage of RNA on the 3' side of pyrimidine nucleotides. Acts on single-stranded and double-stranded RNA. This chain is Ribonuclease pancreatic (RNASE1), found in Equus caballus (Horse).